The primary structure comprises 378 residues: Transcription elongation factor TFIIS (378 aa).

Met-1 is modified (N-acetylmethionine). Positions 10–89 (EGAKKAADAA…EIWKKVVIEE (80 aa)) constitute a TFIIS N-terminal domain. A TFIIS central domain is found at 210 to 333 (VRDKIRELLV…DCERGLAAKA (124 aa)). A TFIIS-type zinc finger spans residues 336 to 376 (DQFKCGRCGQRKCTYYQMQTRSADEPMTTYVTCVNCDNHWK). Residues Cys-340, Cys-343, Cys-368, and Cys-371 each coordinate Zn(2+).

Expressed in roots, leaves and flowers.

It is found in the nucleus. Its function is as follows. Necessary for efficient RNA polymerase II transcription elongation past template-encoded arresting sites. Involved in the control of seed dormancy and germination. This Arabidopsis thaliana (Mouse-ear cress) protein is Transcription elongation factor TFIIS.